The chain runs to 267 residues: Strigolactone esterase RMS3 (267 aa).

The active-site Nucleophile is Ser-96. Catalysis depends on residues Asp-218 and His-247.

It belongs to the AB hydrolase superfamily.

It is found in the cytoplasm. The protein resides in the nucleus. In terms of biological role, involved in strigolactone signaling pathway. Functions downstream of strigolactone synthesis, as a component of hormone signaling and as an enzyme that participates in the conversion of strigolactones to the bioactive form. Binds and hydrolyzes the synthetic strigolactone analog GR24 and its enantiomers in vitro. Forms a stable covalent complex with the D-ring of strigolactone, which is essential for hormone bioactivity. The D-ring is attached to His-247 of the catalytic triad. The hydrolysis of strigolactone into a covalently linked intermediate molecule is required to trigger strigolactone signaling. This mechanism defines RMS3 as a non-canonical hormone receptor with dual functions to generate and sense the active form of strigolactone. Strigolactones are hormones that inhibit tillering and shoot branching through the MAX-dependent pathway, contribute to the regulation of shoot architectural response to phosphate-limiting conditions and function as rhizosphere signal that stimulates hyphal branching of arbuscular mycorrhizal fungi and trigger seed germination of root parasitic weeds. The protein is Strigolactone esterase RMS3 of Pisum sativum (Garden pea).